The primary structure comprises 65 residues: Alpha-conotoxine-like Am1.5 (65 aa).

Residues 1 to 21 form the signal peptide; it reads MGMRMMFTVFLLVVLATTVVS. A propeptide spanning residues 22-46 is cleaved from the precursor; that stretch reads FMSGRAFRDRNAAAKVSDLIALKAR. Glu49 carries the 4-carboxyglutamate modification. The segment at 52 to 54 is ser-Xaa-Pro motif, crucial for potent interaction with nAChR; sequence SHP. 2 positions are modified to 4-hydroxyproline: Pro54 and Pro61. Glu62 carries the post-translational modification 4-carboxyglutamate.

It belongs to the conotoxin A superfamily. Post-translationally, contains 2 disulfide bonds. Expressed by the venom duct.

It localises to the secreted. Its function is as follows. Alpha-conotoxins act on postsynaptic membranes, they bind to the nicotinic acetylcholine receptors (nAChR) and thus inhibit them. In Conus amadis (Amadis cone), this protein is Alpha-conotoxine-like Am1.5.